The following is a 141-amino-acid chain: Small ribosomal subunit protein bS16 (141 aa).

The interval 84–141 is disordered; that stretch reads TRKARSNPEKSKPKAKAQERLEAARMAEEEAAAAAKAAAEAPAEEAPAAEAPAEEAQA. Basic and acidic residues predominate over residues 89-111; it reads SNPEKSKPKAKAQERLEAARMAE. A compositionally biased stretch (low complexity) spans 115 to 141; sequence AAAAKAAAEAPAEEAPAAEAPAEEAQA.

It belongs to the bacterial ribosomal protein bS16 family.

The chain is Small ribosomal subunit protein bS16 from Parvibaculum lavamentivorans (strain DS-1 / DSM 13023 / NCIMB 13966).